The primary structure comprises 508 residues: Monocarboxylate transporter 9 (508 aa).

6 consecutive transmembrane segments (helical) span residues 13–33 (WVIV…PLAV), 53–73 (WVGS…SLFV), 80–100 (PVTI…SLAP), 102–122 (IYFL…LLYT), 137–157 (GLAL…YAAL), and 164–184 (FYGL…ILAC). The disordered stretch occupies residues 242 to 263 (GDWGRETSLPKNPTGAAHTKEP). A run of 6 helical transmembrane segments spans residues 303-323 (VFSA…PPSL), 341-361 (IPLI…LGIL), 370-390 (LYLY…IPLA), 396-416 (LAIL…FPYV), 431-451 (GILM…VGWF), and 460-480 (IAFY…LLAI).

The protein belongs to the major facilitator superfamily. Monocarboxylate porter (TC 2.A.1.13) family. Expressed in the liver and kidneys. In the liver localizes on the sinusoidal membrane of the hepatocytes.

Its subcellular location is the cell membrane. It catalyses the reaction creatine(in) = creatine(out). The catalysed reaction is (R)-carnitine(in) = (R)-carnitine(out). In terms of biological role, extracellular pH-and Na(+)-sensitive low-affinity creatine transporter. Also functions as a pH-independent carnitine efflux transporter. The sequence is that of Monocarboxylate transporter 9 (Slc16a9) from Rattus norvegicus (Rat).